A 584-amino-acid polypeptide reads, in one-letter code: MAAPLAQLRDRFQAALAASFGPEWAATDPLLVPATNPKFGDYQSNVAMSLAKQLGQPPRAIAETLVQNLNLADLCEPPAIAGPGFINFTLQPSYLVAQLQQLQTDERLGIQPVSPPQRVIVDFSSPNIAKEMHVGHLRSTIIGDSIARVLEFQGHEVLRLNHVGDWGTQFGMLIAFLQEQYPQALSQPDALDISDLVAFYKQAKARFDEDPSFQETARQRVVDLQSGEATARQAWQLLCDQSRREFQKIYDRLDIQLEERGESFYNPYLPAIVEDLRRLGLLVEDQGAQCVFLEGFQNKEGQPLPLIVQKSDGGYNYATTDLAALRYRLGQDQAQRIIYVTDSGQANHFAQVFQVAQRAGWLPAAAQIEHVPFGLVQGEDGKKLKTRAGDTVRLRDLLDEAVDRARTDLTTRIAAEERSETPEFIEAVAQAVGLGAVKYADLSQNRNSNYIFSFDKMLALQGNTAPYLLYAYVRIQGIARKGGIDFAQLDPVAAVLTEPTERSLAKQVLQLGEVLDEVARDLLPNRLCSYLFELSQTFNQFYDRCPILNAEEPQRTSRLLLCDLTARTLKLGLSLLGISVLERM.

A 'HIGH' region motif is present at residues 126-136; that stretch reads PNIAKEMHVGH.

It belongs to the class-I aminoacyl-tRNA synthetase family. In terms of assembly, monomer.

The protein localises to the cytoplasm. The enzyme catalyses tRNA(Arg) + L-arginine + ATP = L-arginyl-tRNA(Arg) + AMP + diphosphate. This chain is Arginine--tRNA ligase, found in Synechococcus elongatus (strain ATCC 33912 / PCC 7942 / FACHB-805) (Anacystis nidulans R2).